Reading from the N-terminus, the 429-residue chain is Phosphomethylpyrimidine synthase (429 aa).

Residues asparagine 66, methionine 95, tyrosine 124, histidine 163, 185–187 (SRG), 226–229 (DGLR), and glutamate 265 each bind substrate. Residue histidine 269 coordinates Zn(2+). Residue tyrosine 292 coordinates substrate. Histidine 333 contacts Zn(2+). The [4Fe-4S] cluster site is built by cysteine 407, cysteine 410, and cysteine 414.

It belongs to the ThiC family. [4Fe-4S] cluster serves as cofactor.

It carries out the reaction 5-amino-1-(5-phospho-beta-D-ribosyl)imidazole + S-adenosyl-L-methionine = 4-amino-2-methyl-5-(phosphooxymethyl)pyrimidine + CO + 5'-deoxyadenosine + formate + L-methionine + 3 H(+). Its pathway is cofactor biosynthesis; thiamine diphosphate biosynthesis. Functionally, catalyzes the synthesis of the hydroxymethylpyrimidine phosphate (HMP-P) moiety of thiamine from aminoimidazole ribotide (AIR) in a radical S-adenosyl-L-methionine (SAM)-dependent reaction. This Pyrococcus furiosus (strain ATCC 43587 / DSM 3638 / JCM 8422 / Vc1) protein is Phosphomethylpyrimidine synthase.